The primary structure comprises 157 residues: Protein-export protein SecB (157 aa).

This sequence belongs to the SecB family. As to quaternary structure, homotetramer, a dimer of dimers. One homotetramer interacts with 1 SecA dimer.

The protein resides in the cytoplasm. In terms of biological role, one of the proteins required for the normal export of preproteins out of the cell cytoplasm. It is a molecular chaperone that binds to a subset of precursor proteins, maintaining them in a translocation-competent state. It also specifically binds to its receptor SecA. The protein is Protein-export protein SecB of Tolumonas auensis (strain DSM 9187 / NBRC 110442 / TA 4).